The primary structure comprises 161 residues: 2-C-methyl-D-erythritol 2,4-cyclodiphosphate synthase (161 aa).

A divalent metal cation is bound by residues aspartate 10 and histidine 12. Residues 10–12 (DVH) and 36–37 (HS) contribute to the 4-CDP-2-C-methyl-D-erythritol 2-phosphate site. Histidine 44 lines the a divalent metal cation pocket. Residues 58 to 60 (DIG), 63 to 67 (FSDTD), and arginine 144 each bind 4-CDP-2-C-methyl-D-erythritol 2-phosphate.

It belongs to the IspF family. As to quaternary structure, homotrimer. The cofactor is a divalent metal cation.

It catalyses the reaction 4-CDP-2-C-methyl-D-erythritol 2-phosphate = 2-C-methyl-D-erythritol 2,4-cyclic diphosphate + CMP. It functions in the pathway isoprenoid biosynthesis; isopentenyl diphosphate biosynthesis via DXP pathway; isopentenyl diphosphate from 1-deoxy-D-xylulose 5-phosphate: step 4/6. Functionally, involved in the biosynthesis of isopentenyl diphosphate (IPP) and dimethylallyl diphosphate (DMAPP), two major building blocks of isoprenoid compounds. Catalyzes the conversion of 4-diphosphocytidyl-2-C-methyl-D-erythritol 2-phosphate (CDP-ME2P) to 2-C-methyl-D-erythritol 2,4-cyclodiphosphate (ME-CPP) with a corresponding release of cytidine 5-monophosphate (CMP). In Burkholderia lata (strain ATCC 17760 / DSM 23089 / LMG 22485 / NCIMB 9086 / R18194 / 383), this protein is 2-C-methyl-D-erythritol 2,4-cyclodiphosphate synthase.